The sequence spans 60 residues: Alpha-conotoxin-like 289 (60 aa).

An N-terminal signal peptide occupies residues 1-16 (MFTVFLLVVLATTVVS). Positions 17–42 (FTSDRAFRGRNAAAKASGLVGLTDKR) are excised as a propeptide. The residue at position 43 (Q43) is a Pyrrolidone carboxylic acid. Cystine bridges form between C45–C51 and C46–C59. Residues 47–49 (SYP) are ser-Xaa-Pro motif, crucial for potent interaction with nAChR. A Cysteine amide modification is found at C59.

Belongs to the conotoxin A superfamily. In terms of tissue distribution, expressed by the venom duct.

The protein resides in the secreted. Functionally, alpha-conotoxins act on postsynaptic membranes, they bind to the nicotinic acetylcholine receptors (nAChR) and thus inhibit them. This chain is Alpha-conotoxin-like 289, found in Conus ammiralis (Admiral cone).